The primary structure comprises 425 residues: MTAIIDIVGREILDSRGNPTVEVDVVLEDGSFGRAAVPSGASTGAHEAVELRDGGSRYLGKGVEKAVEVVNGKIFDAIAGMDAESQLLIDQTLIDLDGSANKGNLGANAILGVSLAVAKAAAQASGLPLYRYVGGTNAHVLPVPMMNIINGGAHADNPIDFQEFMILPVGATSIREAVRYGSEVFHTLKKRLKDAGHNTNVGDEGGFAPNLKNAQAALDFIMESIEKAGFKPGEDIALGLDCAATEFFKDGNYVYEGERKTRDPKAQAKYLAKLASDYPIVTIEDGMAEDDWEGWKYLTDLIGNKCQLVGDDLFVTNSARLRDGIRLGVANSILVKVNQIGSLSETLDAVETAHKAGYTAVMSHRSGETEDSTIADLAVATNCGQIKTGSLARSDRTAKYNQLIRIEEELDKQARYAGRSALKLL.

Gln-162 is a binding site for (2R)-2-phosphoglycerate. The active-site Proton donor is the Glu-204. Asp-241, Glu-284, and Asp-311 together coordinate Mg(2+). (2R)-2-phosphoglycerate-binding residues include Lys-336, Arg-365, Ser-366, and Lys-387. The Proton acceptor role is filled by Lys-336.

Belongs to the enolase family. Mg(2+) serves as cofactor.

It localises to the cytoplasm. The protein localises to the secreted. The protein resides in the cell surface. It carries out the reaction (2R)-2-phosphoglycerate = phosphoenolpyruvate + H2O. It functions in the pathway carbohydrate degradation; glycolysis; pyruvate from D-glyceraldehyde 3-phosphate: step 4/5. Its function is as follows. Catalyzes the reversible conversion of 2-phosphoglycerate (2-PG) into phosphoenolpyruvate (PEP). It is essential for the degradation of carbohydrates via glycolysis. The polypeptide is Enolase (Brucella melitensis biotype 2 (strain ATCC 23457)).